The primary structure comprises 213 residues: FMN-dependent NADH:quinone oxidoreductase 3 (213 aa).

Residues S10, 16–18 (SVS), and 96–99 (MYNF) contribute to the FMN site.

It belongs to the azoreductase type 1 family. Homodimer. FMN serves as cofactor.

It catalyses the reaction 2 a quinone + NADH + H(+) = 2 a 1,4-benzosemiquinone + NAD(+). It carries out the reaction N,N-dimethyl-1,4-phenylenediamine + anthranilate + 2 NAD(+) = 2-(4-dimethylaminophenyl)diazenylbenzoate + 2 NADH + 2 H(+). Quinone reductase that provides resistance to thiol-specific stress caused by electrophilic quinones. Shows a preference for naphthoquinones such as plumbagin. In terms of biological role, also exhibits azoreductase activity. Catalyzes the reductive cleavage of the azo bond in aromatic azo compounds to the corresponding amines. Preferred substrates are methyl red, amaranth and p-aminoazobenzene sulfonamide (PAABSA). The polypeptide is FMN-dependent NADH:quinone oxidoreductase 3 (Pseudomonas aeruginosa (strain ATCC 15692 / DSM 22644 / CIP 104116 / JCM 14847 / LMG 12228 / 1C / PRS 101 / PAO1)).